The sequence spans 97 residues: Exodeoxyribonuclease 7 small subunit (97 aa).

Positions 1–22 are disordered; it reads MAKTASPGATPPGNGTEPLPDN.

This sequence belongs to the XseB family. As to quaternary structure, heterooligomer composed of large and small subunits.

It localises to the cytoplasm. It carries out the reaction Exonucleolytic cleavage in either 5'- to 3'- or 3'- to 5'-direction to yield nucleoside 5'-phosphates.. Its function is as follows. Bidirectionally degrades single-stranded DNA into large acid-insoluble oligonucleotides, which are then degraded further into small acid-soluble oligonucleotides. This chain is Exodeoxyribonuclease 7 small subunit, found in Burkholderia lata (strain ATCC 17760 / DSM 23089 / LMG 22485 / NCIMB 9086 / R18194 / 383).